A 484-amino-acid chain; its full sequence is Probable cytochrome P450 508A1 (484 aa).

Residues 1–21 (MALFEIIISLFVVYIIHNAIS) traverse the membrane as a helical segment. Cys-428 is a binding site for heme.

The protein belongs to the cytochrome P450 family. It depends on heme as a cofactor.

It is found in the membrane. The sequence is that of Probable cytochrome P450 508A1 (cyp508A1-1) from Dictyostelium discoideum (Social amoeba).